A 216-amino-acid chain; its full sequence is Adenylate kinase (216 aa).

10 to 15 (GAGKGT) serves as a coordination point for ATP. The interval 30 to 59 (STGDMFRAAMKAETELGLQAKSFIDKGALV) is NMP. Residues T31, R36, 57-59 (ALV), 85-88 (GFPR), and Q92 each bind AMP. The segment at 126–163 (GRRICKECGATYHLEFNPPAKADVCDKCGGELYQRSDD) is LID. R127 contributes to the ATP binding site. Zn(2+)-binding residues include C130 and C133. Residue 136–137 (TY) coordinates ATP. 2 residues coordinate Zn(2+): C150 and C153. 2 residues coordinate AMP: R160 and R171. An ATP-binding site is contributed by Q199.

The protein belongs to the adenylate kinase family. In terms of assembly, monomer.

It localises to the cytoplasm. It carries out the reaction AMP + ATP = 2 ADP. It functions in the pathway purine metabolism; AMP biosynthesis via salvage pathway; AMP from ADP: step 1/1. Functionally, catalyzes the reversible transfer of the terminal phosphate group between ATP and AMP. Plays an important role in cellular energy homeostasis and in adenine nucleotide metabolism. In Bacillus cytotoxicus (strain DSM 22905 / CIP 110041 / 391-98 / NVH 391-98), this protein is Adenylate kinase.